We begin with the raw amino-acid sequence, 433 residues long: Phosphomethylpyrimidine synthase (433 aa).

Substrate is bound by residues N68, M97, Y126, H162, 184-186, 225-228, and E264; these read SRG and DALR. H268 contacts Zn(2+). Y291 lines the substrate pocket. H332 contacts Zn(2+). 3 residues coordinate [4Fe-4S] cluster: C408, C411, and C415.

It belongs to the ThiC family. [4Fe-4S] cluster is required as a cofactor.

The enzyme catalyses 5-amino-1-(5-phospho-beta-D-ribosyl)imidazole + S-adenosyl-L-methionine = 4-amino-2-methyl-5-(phosphooxymethyl)pyrimidine + CO + 5'-deoxyadenosine + formate + L-methionine + 3 H(+). It participates in cofactor biosynthesis; thiamine diphosphate biosynthesis. Functionally, catalyzes the synthesis of the hydroxymethylpyrimidine phosphate (HMP-P) moiety of thiamine from aminoimidazole ribotide (AIR) in a radical S-adenosyl-L-methionine (SAM)-dependent reaction. The protein is Phosphomethylpyrimidine synthase of Fusobacterium nucleatum subsp. nucleatum (strain ATCC 25586 / DSM 15643 / BCRC 10681 / CIP 101130 / JCM 8532 / KCTC 2640 / LMG 13131 / VPI 4355).